The sequence spans 225 residues: MADS-box transcription factor 5 (225 aa).

One can recognise an MADS-box domain in the interval 1 to 61; the sequence is MGRGKVELKR…GRLFEFSTSS (61 aa). The K-box domain occupies 89 to 179; it reads ELSNYQEYLK…KRKIQETSGE (91 aa).

May interact with the K-box of MADS6.

It localises to the nucleus. In terms of biological role, probable transcription factor. The protein is MADS-box transcription factor 5 (MADS5) of Oryza sativa subsp. indica (Rice).